The primary structure comprises 98 residues: Large ribosomal subunit protein uL23c (98 aa).

It belongs to the universal ribosomal protein uL23 family. As to quaternary structure, part of the 50S ribosomal subunit.

The protein resides in the plastid. In terms of biological role, binds to 23S rRNA. This is Large ribosomal subunit protein uL23c (rpl23) from Euglena longa (Euglenophycean alga).